Reading from the N-terminus, the 120-residue chain is Glycine cleavage system H protein (120 aa).

Residues 17 to 99 (VATVGITAHA…QGGGWLYRLK (83 aa)) enclose the Lipoyl-binding domain. Lysine 58 is subject to N6-lipoyllysine.

This sequence belongs to the GcvH family. The glycine cleavage system is composed of four proteins: P, T, L and H. The cofactor is (R)-lipoate.

Functionally, the glycine cleavage system catalyzes the degradation of glycine. The H protein shuttles the methylamine group of glycine from the P protein to the T protein. In Methylorubrum extorquens (strain CM4 / NCIMB 13688) (Methylobacterium extorquens), this protein is Glycine cleavage system H protein.